Here is a 268-residue protein sequence, read N- to C-terminus: Putative hydro-lyase ABSDF2257 (268 aa).

Belongs to the D-glutamate cyclase family.

The chain is Putative hydro-lyase ABSDF2257 from Acinetobacter baumannii (strain SDF).